A 301-amino-acid polypeptide reads, in one-letter code: Homoserine O-acetyltransferase (301 aa).

Cys142 acts as the Acyl-thioester intermediate in catalysis. Residues Lys163 and Ser192 each contribute to the substrate site. The active-site Proton acceptor is the His235. Glu237 is a catalytic residue. Arg249 lines the substrate pocket.

Belongs to the MetA family.

It is found in the cytoplasm. It catalyses the reaction L-homoserine + acetyl-CoA = O-acetyl-L-homoserine + CoA. It participates in amino-acid biosynthesis; L-methionine biosynthesis via de novo pathway; O-acetyl-L-homoserine from L-homoserine: step 1/1. Transfers an acetyl group from acetyl-CoA to L-homoserine, forming acetyl-L-homoserine. The polypeptide is Homoserine O-acetyltransferase (Succinatimonas hippei (strain DSM 22608 / JCM 16073 / KCTC 15190 / YIT 12066)).